The primary structure comprises 280 residues: MDIKINDITLGNNSPFVLFGGINVLESLDSTLQTCAHYVEVTRKLGIPYIFKASFDKANRSSIHSYRGVGLEEGLKIFEKVKAEFGIPVITDVHEPHQCQPVAEVCDVIQLPAFLARQTDLVVAMAKTGNVVNIKKPQFLSPSQMKNIVEKFHEAGNGKLILCERGSSFGYDNLVVDMLGFGVMKQTCGNLPVIFDVTHSLQTRDAGSAASGGRRAQALDLALAGMATRLAGLFLESHPDPKLAKCDGPSALPLHLLEDFLIRIKALDDLIKSQPILTIE.

This sequence belongs to the KdsA family.

Its subcellular location is the cytoplasm. The catalysed reaction is D-arabinose 5-phosphate + phosphoenolpyruvate + H2O = 3-deoxy-alpha-D-manno-2-octulosonate-8-phosphate + phosphate. Its pathway is carbohydrate biosynthesis; 3-deoxy-D-manno-octulosonate biosynthesis; 3-deoxy-D-manno-octulosonate from D-ribulose 5-phosphate: step 2/3. It functions in the pathway bacterial outer membrane biogenesis; lipopolysaccharide biosynthesis. The protein is 2-dehydro-3-deoxyphosphooctonate aldolase of Neisseria meningitidis serogroup B (strain ATCC BAA-335 / MC58).